The sequence spans 431 residues: Chaperone SurA (431 aa).

The N-terminal stretch at 1 to 20 (MKNWRTFILGLALCANGALA) is a signal peptide. 2 consecutive PpiC domains span residues 171-272 (GAEF…KVND) and 282-382 (VTEV…QLID).

It localises to the periplasm. It carries out the reaction [protein]-peptidylproline (omega=180) = [protein]-peptidylproline (omega=0). Its function is as follows. Chaperone involved in the correct folding and assembly of outer membrane proteins. Recognizes specific patterns of aromatic residues and the orientation of their side chains, which are found more frequently in integral outer membrane proteins. May act in both early periplasmic and late outer membrane-associated steps of protein maturation. The sequence is that of Chaperone SurA from Sodalis glossinidius (strain morsitans).